Reading from the N-terminus, the 225-residue chain is Protein-L-isoaspartate O-methyltransferase (225 aa).

S75 is an active-site residue.

The protein belongs to the methyltransferase superfamily. L-isoaspartyl/D-aspartyl protein methyltransferase family.

It localises to the cytoplasm. The catalysed reaction is [protein]-L-isoaspartate + S-adenosyl-L-methionine = [protein]-L-isoaspartate alpha-methyl ester + S-adenosyl-L-homocysteine. Catalyzes the methyl esterification of L-isoaspartyl residues in peptides and proteins that result from spontaneous decomposition of normal L-aspartyl and L-asparaginyl residues. It plays a role in the repair and/or degradation of damaged proteins. The protein is Protein-L-isoaspartate O-methyltransferase of Xanthomonas oryzae pv. oryzae (strain PXO99A).